The chain runs to 399 residues: 4-hydroxyphenylpyruvate dioxygenase (399 aa).

2 consecutive VOC domains span residues 23–166 and 197–355; these read GYDH…LIER and RIDH…LFTK. His200, His283, and Glu366 together coordinate Fe cation.

Belongs to the 4HPPD family. Fe cation is required as a cofactor.

It carries out the reaction 3-(4-hydroxyphenyl)pyruvate + O2 = homogentisate + CO2. It participates in amino-acid degradation; L-phenylalanine degradation; acetoacetate and fumarate from L-phenylalanine: step 3/6. In Coccidioides posadasii (strain C735) (Valley fever fungus), this protein is 4-hydroxyphenylpyruvate dioxygenase (TCRP).